The following is a 348-amino-acid chain: Probable dual-specificity RNA methyltransferase RlmN (348 aa).

E95 acts as the Proton acceptor in catalysis. In terms of domain architecture, Radical SAM core spans 101 to 335 (SGNRLTICVS…VSLRASRGLD (235 aa)). A disulfide bridge links C108 with C340. Residues C115, C119, and C122 each coordinate [4Fe-4S] cluster. S-adenosyl-L-methionine contacts are provided by residues 162-163 (GE), S192, 221-223 (SLH), and N297. Residue C340 is the S-methylcysteine intermediate of the active site.

It belongs to the radical SAM superfamily. RlmN family. [4Fe-4S] cluster is required as a cofactor.

It localises to the cytoplasm. It catalyses the reaction adenosine(2503) in 23S rRNA + 2 reduced [2Fe-2S]-[ferredoxin] + 2 S-adenosyl-L-methionine = 2-methyladenosine(2503) in 23S rRNA + 5'-deoxyadenosine + L-methionine + 2 oxidized [2Fe-2S]-[ferredoxin] + S-adenosyl-L-homocysteine. It carries out the reaction adenosine(37) in tRNA + 2 reduced [2Fe-2S]-[ferredoxin] + 2 S-adenosyl-L-methionine = 2-methyladenosine(37) in tRNA + 5'-deoxyadenosine + L-methionine + 2 oxidized [2Fe-2S]-[ferredoxin] + S-adenosyl-L-homocysteine. Functionally, specifically methylates position 2 of adenine 2503 in 23S rRNA and position 2 of adenine 37 in tRNAs. The polypeptide is Probable dual-specificity RNA methyltransferase RlmN (Prochlorococcus marinus (strain SARG / CCMP1375 / SS120)).